Consider the following 579-residue polypeptide: Rho guanine nucleotide exchange factor 25 (579 aa).

2 disordered regions span residues 27–61 (AVPG…GERE) and 172–194 (VKAQ…EQKK). The region spanning 199 to 375 (RSMFVLSELV…CFVPKRCNDM (177 aa)) is the DH domain. The segment at 317–338 (LGHRLQLSDLLIKPVQRIMKYQ) is important for binding to Rho GTPases. A PH domain is found at 380 to 499 (RLRGFEGKLT…ESQTNSLGRS (120 aa)). Residues 472–498 (SQRDFLNALQSPIEYQRRESQTNSLGR) are sufficient to bind activated GNAQ. 2 disordered regions span residues 487–516 (QRRE…VSMH) and 546–579 (LSET…EDEL).

As to quaternary structure, interacts with activated GNAQ and GNA11. Interacts with RHOA, CDC42 and RAC1. Interacts (via the DH domain) with POPDC1 (via the C-terminus cytoplasmic tail).

Its subcellular location is the cytoplasm. It localises to the myofibril. The protein localises to the sarcomere. The protein resides in the cell membrane. In terms of biological role, may play a role in actin cytoskeleton reorganization in different tissues since its activation induces formation of actin stress fibers. It works as a guanine nucleotide exchange factor for Rho family of small GTPases. Links specifically G alpha q/11-coupled receptors to RHOA activation. May be an important regulator of processes involved in axon and dendrite formation. In neurons seems to be an exchange factor primarily for RAC1. Involved in skeletal myogenesis. This chain is Rho guanine nucleotide exchange factor 25 (Arhgef25), found in Rattus norvegicus (Rat).